The following is a 440-amino-acid chain: Chromosomal replication initiator protein DnaA (440 aa).

Residues 1–69 are domain I, interacts with DnaA modulators; it reads MKERILQEIK…VKVVLGNDAT (69 aa). The segment at 69–96 is domain II; that stretch reads TFEITYEAFEPHSSYSEPLVKKRAVLLT. The tract at residues 97 to 313 is domain III, AAA+ region; it reads PLNPDYTFEN…GAIIKLLVYK (217 aa). Positions 108, 113, 140, 141, 142, 143, 144, 145, and 300 each coordinate ADP. Glycine 140 contributes to the ATP binding site. Residues glycine 142, lysine 143, and threonine 144 each coordinate ATP. A Mg(2+)-binding site is contributed by threonine 144. Residues 314-440 are domain IV, binds dsDNA; that stretch reads ETTGKEVDLK…GEISRRALSG (127 aa).

This sequence belongs to the DnaA family. In terms of assembly, oligomerizes as a right-handed, spiral filament on DNA at oriC.

It is found in the cytoplasm. In terms of biological role, plays an essential role in the initiation and regulation of chromosomal replication. ATP-DnaA binds to the origin of replication (oriC) to initiate formation of the DNA replication initiation complex once per cell cycle. Binds the DnaA box (a 9 base pair repeat at the origin) and separates the double-stranded (ds)DNA. Forms a right-handed helical filament on oriC DNA; dsDNA binds to the exterior of the filament while single-stranded (ss)DNA is stabiized in the filament's interior. The ATP-DnaA-oriC complex binds and stabilizes one strand of the AT-rich DNA unwinding element (DUE), permitting loading of DNA polymerase. After initiation quickly degrades to an ADP-DnaA complex that is not apt for DNA replication. Binds acidic phospholipids. Functionally, the DnaA box consensus is 5'-[ATC][AT]AC[CT]TACCA[CT][CTA]-3' in this bacterium. Mutagenesis of residues that line the central pore blocks dsDNA separation. In Thermotoga maritima (strain ATCC 43589 / DSM 3109 / JCM 10099 / NBRC 100826 / MSB8), this protein is Chromosomal replication initiator protein DnaA.